We begin with the raw amino-acid sequence, 106 residues long: Large ribosomal subunit protein uL24 (106 aa).

This sequence belongs to the universal ribosomal protein uL24 family. As to quaternary structure, part of the 50S ribosomal subunit.

Its function is as follows. One of two assembly initiator proteins, it binds directly to the 5'-end of the 23S rRNA, where it nucleates assembly of the 50S subunit. One of the proteins that surrounds the polypeptide exit tunnel on the outside of the subunit. In Paracidovorax citrulli (strain AAC00-1) (Acidovorax citrulli), this protein is Large ribosomal subunit protein uL24.